A 396-amino-acid polypeptide reads, in one-letter code: Digeranylgeranylglycerophospholipid reductase (396 aa).

FAD is bound by residues glycine 14, glutamate 33, cysteine 44, glycine 45, glycine 47, arginine 100, alanine 124, glutamate 162, aspartate 283, glycine 295, and isoleucine 296. The a 2,3-bis-O-(geranylgeranyl)-sn-glycerol 1-phospholipid site is built by lysine 338 and valine 374.

Belongs to the geranylgeranyl reductase family. DGGGPL reductase subfamily. FAD is required as a cofactor.

It carries out the reaction 2,3-bis-O-(phytanyl)-sn-glycerol 1-phosphate + 8 NADP(+) = 2,3-bis-O-(geranylgeranyl)-sn-glycerol 1-phosphate + 8 NADPH + 8 H(+). The catalysed reaction is 2,3-bis-O-(phytanyl)-sn-glycerol 1-phosphate + 8 NAD(+) = 2,3-bis-O-(geranylgeranyl)-sn-glycerol 1-phosphate + 8 NADH + 8 H(+). The enzyme catalyses a 2,3-bis-O-phytanyl-sn-glycerol 1-phospholipid + 8 A = a 2,3-bis-O-(geranylgeranyl)-sn-glycerol 1-phospholipid + 8 AH2. It catalyses the reaction CDP-2,3-bis-O-(geranylgeranyl)-sn-glycerol + 8 AH2 = CDP-2,3-bis-O-(phytanyl)-sn-glycerol + 8 A. It carries out the reaction archaetidylserine + 8 AH2 = 2,3-bis-O-phytanyl-sn-glycero-3-phospho-L-serine + 8 A. The protein operates within membrane lipid metabolism; glycerophospholipid metabolism. In terms of biological role, is involved in the reduction of 2,3-digeranylgeranylglycerophospholipids (unsaturated archaeols) into 2,3-diphytanylglycerophospholipids (saturated archaeols) in the biosynthesis of archaeal membrane lipids. Catalyzes the formation of archaetidic acid (2,3-di-O-phytanyl-sn-glyceryl phosphate) from 2,3-di-O-geranylgeranylglyceryl phosphate (DGGGP) via the hydrogenation of each double bond of the isoprenoid chains. Is also probably able to reduce double bonds of geranyl groups in CDP-2,3-bis-O-(geranylgeranyl)-sn-glycerol and archaetidylserine, thus acting at various stages in the biosynthesis of archaeal membrane lipids. The chain is Digeranylgeranylglycerophospholipid reductase from Thermoplasma volcanium (strain ATCC 51530 / DSM 4299 / JCM 9571 / NBRC 15438 / GSS1).